Here is a 92-residue protein sequence, read N- to C-terminus: Indole-3-acetic acid-induced protein ARG7 (92 aa).

The protein belongs to the ARG7 family.

The sequence is that of Indole-3-acetic acid-induced protein ARG7 (ARG7) from Vigna radiata var. radiata (Mung bean).